We begin with the raw amino-acid sequence, 100 residues long: Aspartyl/glutamyl-tRNA(Asn/Gln) amidotransferase subunit C (100 aa).

It belongs to the GatC family. As to quaternary structure, heterotrimer of A, B and C subunits.

It carries out the reaction L-glutamyl-tRNA(Gln) + L-glutamine + ATP + H2O = L-glutaminyl-tRNA(Gln) + L-glutamate + ADP + phosphate + H(+). The enzyme catalyses L-aspartyl-tRNA(Asn) + L-glutamine + ATP + H2O = L-asparaginyl-tRNA(Asn) + L-glutamate + ADP + phosphate + 2 H(+). Functionally, allows the formation of correctly charged Asn-tRNA(Asn) or Gln-tRNA(Gln) through the transamidation of misacylated Asp-tRNA(Asn) or Glu-tRNA(Gln) in organisms which lack either or both of asparaginyl-tRNA or glutaminyl-tRNA synthetases. The reaction takes place in the presence of glutamine and ATP through an activated phospho-Asp-tRNA(Asn) or phospho-Glu-tRNA(Gln). This chain is Aspartyl/glutamyl-tRNA(Asn/Gln) amidotransferase subunit C, found in Janthinobacterium sp. (strain Marseille) (Minibacterium massiliensis).